The primary structure comprises 337 residues: Pyrophosphate--fructose 6-phosphate 1-phosphotransferase (337 aa).

G10 contacts diphosphate. D101 contacts Mg(2+). Residues 124 to 126 (TID), R161, 168 to 170 (MGR), E220, R257, and 263 to 266 (HTIR) contribute to the substrate site. Residue D126 is the Proton acceptor of the active site.

The protein belongs to the phosphofructokinase type A (PFKA) family. Mixed-substrate PFK group III subfamily. As to quaternary structure, homodimer or homotrimer. Requires Mg(2+) as cofactor.

It localises to the cytoplasm. It catalyses the reaction beta-D-fructose 6-phosphate + diphosphate = beta-D-fructose 1,6-bisphosphate + phosphate + H(+). The protein operates within carbohydrate degradation; glycolysis; D-glyceraldehyde 3-phosphate and glycerone phosphate from D-glucose: step 3/4. Its activity is regulated as follows. Non-allosteric. Catalyzes the phosphorylation of D-fructose 6-phosphate, the first committing step of glycolysis. Uses inorganic phosphate (PPi) as phosphoryl donor instead of ATP like common ATP-dependent phosphofructokinases (ATP-PFKs), which renders the reaction reversible, and can thus function both in glycolysis and gluconeogenesis. Consistently, PPi-PFK can replace the enzymes of both the forward (ATP-PFK) and reverse (fructose-bisphosphatase (FBPase)) reactions. The polypeptide is Pyrophosphate--fructose 6-phosphate 1-phosphotransferase (Thermoproteus tenax (strain ATCC 35583 / DSM 2078 / JCM 9277 / NBRC 100435 / Kra 1)).